Reading from the N-terminus, the 689-residue chain is Glycine--tRNA ligase beta subunit (689 aa).

Belongs to the class-II aminoacyl-tRNA synthetase family. Tetramer of two alpha and two beta subunits.

The protein localises to the cytoplasm. The enzyme catalyses tRNA(Gly) + glycine + ATP = glycyl-tRNA(Gly) + AMP + diphosphate. This is Glycine--tRNA ligase beta subunit from Lacticaseibacillus paracasei (strain ATCC 334 / BCRC 17002 / CCUG 31169 / CIP 107868 / KCTC 3260 / NRRL B-441) (Lactobacillus paracasei).